We begin with the raw amino-acid sequence, 497 residues long: MGLEALVPLAVIVTIFLLLVDLMHRRQRWAARYPPGPLPLPGLGNLLHVDFQNTPYCFDQLRRRFGDVFSLQLAWTPVVVLNGLAAVREALVTHGEDTADRPPVPITQILGFGPRSQGVFLARYGPAWREQRRFSVSTLRNLGLGKKSLEQWVTEEAACLCAAFANHSGRPFRPNGLLDKAVSNVIASLTCGRRFEYDDPRFLRLLDLAQEGLKEESGFLREVLNAVPVLLHIPALAGKVLRFQKAFLTQLDELLTEHRMTWDPAQPPRDLTEAFLAEMEKAKGNPESSFNDENLRIVVADLFSAGMVTTSTTLAWGLLLMILHPDVQRRVQQEIDDVIGQVRRPEMGDQARMPYTTAVIHEVQRFGDIVPLGVTHMTSRDIEVQGFRIPKGTTLFTNLSSVLKDEAVWEKPFRFHPEHFLDAQGHFVKPEAFLPFSAGRRACLGEPLARMELFLFFTSLLQHFSFSVPTGQPRPSHHGVFAFLVTPSPYELCAVPR.

Position 301 (D301) interacts with substrate. Residue C443 participates in heme binding.

Belongs to the cytochrome P450 family. Requires heme as cofactor.

It localises to the endoplasmic reticulum membrane. It is found in the microsome membrane. It carries out the reaction (5Z,8Z,11Z,14Z)-eicosatetraenoate + reduced [NADPH--hemoprotein reductase] + O2 = (8R,9S)-epoxy-(5Z,11Z,14Z)-eicosatrienoate + oxidized [NADPH--hemoprotein reductase] + H2O + H(+). The catalysed reaction is (5Z,8Z,11Z,14Z)-eicosatetraenoate + reduced [NADPH--hemoprotein reductase] + O2 = (11R,12S)-epoxy-(5Z,8Z,14Z)-eicosatrienoate + oxidized [NADPH--hemoprotein reductase] + H2O + H(+). The enzyme catalyses (5Z,8Z,11Z,14Z)-eicosatetraenoate + reduced [NADPH--hemoprotein reductase] + O2 = (14S,15R)-epoxy-(5Z,8Z,11Z)-eicosatrienoate + oxidized [NADPH--hemoprotein reductase] + H2O + H(+). It catalyses the reaction N-(5Z,8Z,11Z,14Z-eicosatetraenoyl)-ethanolamine + reduced [NADPH--hemoprotein reductase] + O2 = N-(8,9-epoxy-5Z,11Z,14Z-eicosatrienoyl)-ethanolamine + oxidized [NADPH--hemoprotein reductase] + H2O + H(+). It carries out the reaction N-(5Z,8Z,11Z,14Z-eicosatetraenoyl)-ethanolamine + reduced [NADPH--hemoprotein reductase] + O2 = N-(11,12-epoxy-5Z,8Z,14Z-eicosatrienoyl)-ethanolamine + oxidized [NADPH--hemoprotein reductase] + H2O + H(+). The catalysed reaction is N-(5Z,8Z,11Z,14Z-eicosatetraenoyl)-ethanolamine + reduced [NADPH--hemoprotein reductase] + O2 = N-(14,15-epoxy-5Z,8Z,11Z-eicosatrienoyl)-ethanolamine + oxidized [NADPH--hemoprotein reductase] + H2O + H(+). The enzyme catalyses N-(5Z,8Z,11Z,14Z-eicosatetraenoyl)-ethanolamine + reduced [NADPH--hemoprotein reductase] + O2 = N-(20-hydroxy-5Z,8Z,11Z,14Z-eicosatetraenoyl)-ethanolamine + oxidized [NADPH--hemoprotein reductase] + H2O + H(+). It catalyses the reaction (5Z,8Z,11Z,14Z,17Z)-eicosapentaenoate + reduced [NADPH--hemoprotein reductase] + O2 = (17S,18R)-epoxy-(5Z,8Z,11Z,14Z)-eicosatetraenoate + oxidized [NADPH--hemoprotein reductase] + H2O + H(+). It carries out the reaction (4Z,7Z,10Z,13Z,16Z,19Z)-docosahexaenoate + reduced [NADPH--hemoprotein reductase] + O2 = (19R,20S)-epoxy-(4Z,7Z,10Z,13Z,16Z)-docosapentaenoate + oxidized [NADPH--hemoprotein reductase] + H2O + H(+). The catalysed reaction is (4Z,7Z,10Z,13Z,16Z,19Z)-docosahexaenoate + reduced [NADPH--hemoprotein reductase] + O2 = (19S,20R)-epoxy-(4Z,7Z,10Z,13Z,16Z)-docosapentaenoate + oxidized [NADPH--hemoprotein reductase] + H2O + H(+). The enzyme catalyses cholesterol + reduced [NADPH--hemoprotein reductase] + O2 = 25-hydroxycholesterol + oxidized [NADPH--hemoprotein reductase] + H2O + H(+). It catalyses the reaction all-trans-retinol + reduced [NADPH--hemoprotein reductase] + O2 = all-trans-retinal + oxidized [NADPH--hemoprotein reductase] + 2 H2O + H(+). Its pathway is cofactor metabolism; retinol metabolism. The protein operates within lipid metabolism; fatty acid metabolism. It participates in steroid metabolism; cholesterol metabolism. In terms of biological role, a cytochrome P450 monooxygenase involved in the metabolism of fatty acids, steroids and retinoids. Mechanistically, uses molecular oxygen inserting one oxygen atom into a substrate, and reducing the second into a water molecule, with two electrons provided by NADPH via cytochrome P450 reductase (NADPH--hemoprotein reductase). Catalyzes the epoxidation of double bonds of polyunsaturated fatty acids (PUFA). Metabolizes endocannabinoid arachidonoylethanolamide (anandamide) to 20-hydroxyeicosatetraenoic acid ethanolamide (20-HETE-EA) and 8,9-, 11,12-, and 14,15-epoxyeicosatrienoic acid ethanolamides (EpETrE-EAs), potentially modulating endocannabinoid system signaling. Catalyzes the hydroxylation of carbon-hydrogen bonds. Metabolizes cholesterol toward 25-hydroxycholesterol, a physiological regulator of cellular cholesterol homeostasis. Catalyzes the oxidative transformations of all-trans retinol to all-trans retinal, a precursor for the active form all-trans-retinoic acid. Also involved in the oxidative metabolism of drugs such as antiarrhythmics, adrenoceptor antagonists, and tricyclic antidepressants. The sequence is that of Cytochrome P450 2D6 (CYP2D6) from Pan paniscus (Pygmy chimpanzee).